Here is a 90-residue protein sequence, read N- to C-terminus: Probable Fe(2+)-trafficking protein (90 aa).

This sequence belongs to the Fe(2+)-trafficking protein family.

In terms of biological role, could be a mediator in iron transactions between iron acquisition and iron-requiring processes, such as synthesis and/or repair of Fe-S clusters in biosynthetic enzymes. In Leptothrix cholodnii (strain ATCC 51168 / LMG 8142 / SP-6) (Leptothrix discophora (strain SP-6)), this protein is Probable Fe(2+)-trafficking protein.